A 370-amino-acid chain; its full sequence is Cytochrome b (370 aa).

The next 4 membrane-spanning stretches (helical) occupy residues 25-45, 69-90, 105-125, and 170-190; these read FGSM…FLAV, WMMQ…YIHI, WLSG…GYVL, and FFAL…LHVM. 2 residues coordinate heme b: H75 and H89. 2 residues coordinate heme b: H174 and H188. A ubiquinone is bound at residue H193. 4 helical membrane passes run 218 to 238, 280 to 300, 312 to 332, and 339 to 358; these read YKDL…ISFY, LGGA…PFTH, FMQL…WTAT, and FTMI…ISNP.

It belongs to the cytochrome b family. As to quaternary structure, the cytochrome bc1 complex contains 3 respiratory subunits (MT-CYB, CYC1 and UQCRFS1), 2 core proteins (UQCRC1 and UQCRC2) and probably 6 low-molecular weight proteins. Heme b is required as a cofactor.

The protein resides in the mitochondrion inner membrane. Its function is as follows. Component of the ubiquinol-cytochrome c reductase complex (complex III or cytochrome b-c1 complex) that is part of the mitochondrial respiratory chain. The b-c1 complex mediates electron transfer from ubiquinol to cytochrome c. Contributes to the generation of a proton gradient across the mitochondrial membrane that is then used for ATP synthesis. This chain is Cytochrome b (MT-CYB), found in Corallus hortulanus enydris (Garden tree boa).